A 176-amino-acid polypeptide reads, in one-letter code: Transcription factor E (176 aa).

The 83-residue stretch at E8 to P90 folds into the HTH TFE/IIEalpha-type domain.

The protein belongs to the TFE family. In terms of assembly, monomer. Interaction with RNA polymerase subunits RpoF and RpoE is necessary for Tfe stimulatory transcription activity. Able to interact with Tbp and RNA polymerase in the absence of DNA promoter. Interacts both with the preinitiation and elongation complexes.

Functionally, transcription factor that plays a role in the activation of archaeal genes transcribed by RNA polymerase. Facilitates transcription initiation by enhancing TATA-box recognition by TATA-box-binding protein (Tbp), and transcription factor B (Tfb) and RNA polymerase recruitment. Not absolutely required for transcription in vitro, but particularly important in cases where Tbp or Tfb function is not optimal. It dynamically alters the nucleic acid-binding properties of RNA polymerases by stabilizing the initiation complex and destabilizing elongation complexes. Seems to translocate with the RNA polymerase following initiation and acts by binding to the non template strand of the transcription bubble in elongation complexes. The chain is Transcription factor E from Haloarcula marismortui (strain ATCC 43049 / DSM 3752 / JCM 8966 / VKM B-1809) (Halobacterium marismortui).